The following is a 741-amino-acid chain: Pentatricopeptide repeat-containing protein At1g08070, chloroplastic (741 aa).

13 PPR repeats span residues 98 to 132 (NLLI…GLLP), 133 to 167 (NSYT…GCDL), 168 to 202 (DLYV…DVVS), 203 to 229 (YTAL…IPVK), 230 to 264 (DVVS…NVRP), 265 to 299 (DEST…GFGS), 300 to 330 (NLKI…LPYK), 331 to 365 (DVIS…GETP), 366 to 396 (NDVT…IDKR), 403 to 433 (ASSL…ILHK), 434 to 468 (SLSS…GIQP), 469 to 499 (DDIT…MTQD), and 505 to 535 (KLEH…MEME). The type E motif stretch occupies residues 540-615 (IWCSLLKACK…VPGCSSIEID (76 aa)). Positions 616 to 646 (SVVHEFIIGDKFHPRNREIYGMLEEMEVLLE) are type E(+) motif. The tract at residues 647 to 741 (KAGFVPDTSE…DGVCSCNDYW (95 aa)) is type DYW motif.

Belongs to the PPR family. PCMP-H subfamily. In terms of assembly, interacts with ORRM1. Interacts with VAR3/OZ1.

The protein localises to the plastid. The protein resides in the chloroplast. Its function is as follows. Involved in multiple sites RNA editing events in chloroplasts. Involved in the editing of the site 9 of ndhB (ndhB-9) and site 1 of ndhG (ndhG-1) transcripts, which are two plastid-encoded subunits of the chloroplast NAD(P)H dehydrogenase (NDH) complex. Not essential for the activity of the NDH complex of the photosynthetic electron transport chain. The polypeptide is Pentatricopeptide repeat-containing protein At1g08070, chloroplastic (PCMP-H12) (Arabidopsis thaliana (Mouse-ear cress)).